Reading from the N-terminus, the 156-residue chain is ATP synthase subunit b (156 aa).

Residues Ile5–Pro27 traverse the membrane as a helical segment.

It belongs to the ATPase B chain family. As to quaternary structure, F-type ATPases have 2 components, F(1) - the catalytic core - and F(0) - the membrane proton channel. F(1) has five subunits: alpha(3), beta(3), gamma(1), delta(1), epsilon(1). F(0) has three main subunits: a(1), b(2) and c(10-14). The alpha and beta chains form an alternating ring which encloses part of the gamma chain. F(1) is attached to F(0) by a central stalk formed by the gamma and epsilon chains, while a peripheral stalk is formed by the delta and b chains.

It localises to the cell inner membrane. F(1)F(0) ATP synthase produces ATP from ADP in the presence of a proton or sodium gradient. F-type ATPases consist of two structural domains, F(1) containing the extramembraneous catalytic core and F(0) containing the membrane proton channel, linked together by a central stalk and a peripheral stalk. During catalysis, ATP synthesis in the catalytic domain of F(1) is coupled via a rotary mechanism of the central stalk subunits to proton translocation. In terms of biological role, component of the F(0) channel, it forms part of the peripheral stalk, linking F(1) to F(0). This is ATP synthase subunit b from Francisella tularensis subsp. tularensis (strain WY96-3418).